Consider the following 318-residue polypeptide: L-carnitine dehydrogenase (318 aa).

14–19 (GSGVIG) contributes to the NAD(+) binding site.

The protein belongs to the 3-hydroxyacyl-CoA dehydrogenase family. L-carnitine dehydrogenase subfamily. In terms of assembly, homodimer.

It localises to the cytoplasm. The catalysed reaction is carnitine + NAD(+) = 3-dehydrocarnitine + NADH + H(+). Its pathway is amine and polyamine metabolism; carnitine metabolism. In terms of biological role, catalyzes the NAD(+)-dependent oxidation of L-carnitine to 3-dehydrocarnitine. The chain is L-carnitine dehydrogenase from Pseudomonas syringae pv. syringae (strain B728a).